A 370-amino-acid chain; its full sequence is tRNA-specific 2-thiouridylase MnmA (370 aa).

Residues 7 to 14 (GISGGVDS) and Met33 each bind ATP. The segment at 104–106 (NPD) is interaction with target base in tRNA. The active-site Nucleophile is Cys109. Cys109 and Cys208 are joined by a disulfide. Gly134 contacts ATP. The interval 158–160 (KDQ) is interaction with tRNA. Residue Cys208 is the Cysteine persulfide intermediate of the active site.

The protein belongs to the MnmA/TRMU family.

It localises to the cytoplasm. The catalysed reaction is S-sulfanyl-L-cysteinyl-[protein] + uridine(34) in tRNA + AH2 + ATP = 2-thiouridine(34) in tRNA + L-cysteinyl-[protein] + A + AMP + diphosphate + H(+). Catalyzes the 2-thiolation of uridine at the wobble position (U34) of tRNA, leading to the formation of s(2)U34. The polypeptide is tRNA-specific 2-thiouridylase MnmA (Malacoplasma penetrans (strain HF-2) (Mycoplasma penetrans)).